A 471-amino-acid chain; its full sequence is Probable ribonuclease FAU-1 (471 aa).

It belongs to the FAU-1 family.

Functionally, probable RNase involved in rRNA stability through maturation and/or degradation of precursor rRNAs. Binds to RNA in loop regions with AU-rich sequences. This Caldivirga maquilingensis (strain ATCC 700844 / DSM 13496 / JCM 10307 / IC-167) protein is Probable ribonuclease FAU-1.